The sequence spans 73 residues: DNA gyrase inhibitor YacG (73 aa).

Zn(2+) contacts are provided by C14, C17, C30, and C34. The disordered stretch occupies residues 54 to 73; the sequence is AEQADDTAGPGAAEDDTDSH.

The protein belongs to the DNA gyrase inhibitor YacG family. Interacts with GyrB. Zn(2+) serves as cofactor.

In terms of biological role, inhibits all the catalytic activities of DNA gyrase by preventing its interaction with DNA. Acts by binding directly to the C-terminal domain of GyrB, which probably disrupts DNA binding by the gyrase. The sequence is that of DNA gyrase inhibitor YacG from Hyphomonas neptunium (strain ATCC 15444).